The chain runs to 558 residues: Dihydroxy-acid dehydratase (558 aa).

Aspartate 78 lines the Mg(2+) pocket. Cysteine 119 is a binding site for [2Fe-2S] cluster. Mg(2+) is bound by residues aspartate 120 and lysine 121. Residue lysine 121 is modified to N6-carboxylysine. Residue cysteine 192 coordinates [2Fe-2S] cluster. Mg(2+) is bound at residue glutamate 446. Catalysis depends on serine 472, which acts as the Proton acceptor.

This sequence belongs to the IlvD/Edd family. As to quaternary structure, homodimer. Requires [2Fe-2S] cluster as cofactor. The cofactor is Mg(2+).

The enzyme catalyses (2R)-2,3-dihydroxy-3-methylbutanoate = 3-methyl-2-oxobutanoate + H2O. It carries out the reaction (2R,3R)-2,3-dihydroxy-3-methylpentanoate = (S)-3-methyl-2-oxopentanoate + H2O. Its pathway is amino-acid biosynthesis; L-isoleucine biosynthesis; L-isoleucine from 2-oxobutanoate: step 3/4. The protein operates within amino-acid biosynthesis; L-valine biosynthesis; L-valine from pyruvate: step 3/4. In terms of biological role, functions in the biosynthesis of branched-chain amino acids. Catalyzes the dehydration of (2R,3R)-2,3-dihydroxy-3-methylpentanoate (2,3-dihydroxy-3-methylvalerate) into 2-oxo-3-methylpentanoate (2-oxo-3-methylvalerate) and of (2R)-2,3-dihydroxy-3-methylbutanoate (2,3-dihydroxyisovalerate) into 2-oxo-3-methylbutanoate (2-oxoisovalerate), the penultimate precursor to L-isoleucine and L-valine, respectively. This is Dihydroxy-acid dehydratase from Campylobacter jejuni subsp. jejuni serotype O:2 (strain ATCC 700819 / NCTC 11168).